Consider the following 161-residue polypeptide: uncharacterized protein (161 aa).

It belongs to the mimivirus L761/L899 family.

The protein resides in the virion. This is an uncharacterized protein from Acanthamoeba polyphaga (Amoeba).